A 486-amino-acid polypeptide reads, in one-letter code: F-box protein At1g80960 (486 aa).

An F-box domain is found at Val-49 to Arg-97.

This chain is F-box protein At1g80960, found in Arabidopsis thaliana (Mouse-ear cress).